A 163-amino-acid polypeptide reads, in one-letter code: Small ribosomal subunit protein eS10A (163 aa).

The segment at 92-163 (LTQTTRSNAV…GFGRASRYDN (72 aa)) is disordered. The segment covering 105 to 116 (GGPGGPGGGFGG) has biased composition (gly residues).

Belongs to the eukaryotic ribosomal protein eS10 family.

The protein resides in the cytoplasm. The polypeptide is Small ribosomal subunit protein eS10A (RpS10a) (Drosophila melanogaster (Fruit fly)).